Here is a 352-residue protein sequence, read N- to C-terminus: Uroporphyrinogen decarboxylase (352 aa).

Substrate is bound by residues 26–30 (RQAGR), aspartate 76, tyrosine 153, serine 208, and histidine 323.

It belongs to the uroporphyrinogen decarboxylase family. As to quaternary structure, homodimer.

Its subcellular location is the cytoplasm. It catalyses the reaction uroporphyrinogen III + 4 H(+) = coproporphyrinogen III + 4 CO2. Its pathway is porphyrin-containing compound metabolism; protoporphyrin-IX biosynthesis; coproporphyrinogen-III from 5-aminolevulinate: step 4/4. Functionally, catalyzes the decarboxylation of four acetate groups of uroporphyrinogen-III to yield coproporphyrinogen-III. The chain is Uroporphyrinogen decarboxylase from Synechococcus sp. (strain CC9902).